A 136-amino-acid polypeptide reads, in one-letter code: Histone H3.3 type c (136 aa).

Positions 1-30 (MARTKQTARKSTGAKVPRKHLSSKSSFPSK) are disordered. An N6,N6,N6-trimethyllysine; by set1; alternate modification is found at K5. K5 bears the N6,N6-dimethyllysine; by set1; alternate mark. 2 positions are modified to N6-acetyllysine; alternate: K5 and K10. Position 5 is an N6-methyllysine; by set1; alternate (K5). At K10 the chain carries N6,N6,N6-trimethyllysine; alternate. At K10 the chain carries N6,N6-dimethyllysine; alternate. An N6-methyllysine; alternate modification is found at K10. Phosphoserine is present on S11. The residue at position 15 (K15) is an N6-acetyllysine. Residues K19, K24, and K37 each carry the N6-acetyllysine; alternate modification. 3 positions are modified to N6-methyllysine; alternate: K19, K24, and K37. At K37 the chain carries N6,N6,N6-trimethyllysine; alternate. K37 carries the post-translational modification N6,N6-dimethyllysine; alternate. K57 is subject to N6-acetyllysine. K80 bears the N6,N6,N6-trimethyllysine; alternate mark. Position 80 is an N6,N6-dimethyllysine; alternate (K80). An N6-methyllysine; alternate modification is found at K80.

Belongs to the histone H3 family. In terms of assembly, the nucleosome is a histone octamer containing two molecules each of H2A, H2B, H3 and H4 assembled in one H3-H4 heterotetramer and two H2A-H2B heterodimers. The octamer wraps approximately 147 bp of DNA. Post-translationally, acetylation is generally linked to gene activation. Different methylation states of H3K4 mark distinct developmental phases. H3K4me2 is associated with euchromatic regions. H3K4me3 is a mark of active chromatin. set1 is responsible for all mono-, di- and tri-methylation of H3K4. H3K4me facilitates subsequent acetylation of H3 and H4. Methylation at H3K9 is linked to gene repression. In terms of processing, H3S10ph, which is linked to gene activation, prevents methylation at H3K9 but facilitates acetylation of H3 and H4.

The protein resides in the nucleus. It localises to the chromosome. In terms of biological role, core component of nucleosome. Nucleosomes wrap and compact DNA into chromatin, limiting DNA accessibility to the cellular machineries which require DNA as a template. Histones thereby play a central role in transcription regulation, DNA repair, DNA replication and chromosomal stability. DNA accessibility is regulated via a complex set of post-translational modifications of histones, also called histone code, and nucleosome remodeling. This Dictyostelium discoideum (Social amoeba) protein is Histone H3.3 type c (H3c).